The primary structure comprises 232 residues: Phosphatidylserine decarboxylase proenzyme (232 aa).

Residue S190 is the Schiff-base intermediate with substrate; via pyruvic acid of the active site. S190 carries the post-translational modification Pyruvic acid (Ser); by autocatalysis.

It belongs to the phosphatidylserine decarboxylase family. PSD-A subfamily. Heterodimer of a large membrane-associated beta subunit and a small pyruvoyl-containing alpha subunit. It depends on pyruvate as a cofactor. Is synthesized initially as an inactive proenzyme. Formation of the active enzyme involves a self-maturation process in which the active site pyruvoyl group is generated from an internal serine residue via an autocatalytic post-translational modification. Two non-identical subunits are generated from the proenzyme in this reaction, and the pyruvate is formed at the N-terminus of the alpha chain, which is derived from the carboxyl end of the proenzyme. The post-translation cleavage follows an unusual pathway, termed non-hydrolytic serinolysis, in which the side chain hydroxyl group of the serine supplies its oxygen atom to form the C-terminus of the beta chain, while the remainder of the serine residue undergoes an oxidative deamination to produce ammonia and the pyruvoyl prosthetic group on the alpha chain.

The protein resides in the cell membrane. The catalysed reaction is a 1,2-diacyl-sn-glycero-3-phospho-L-serine + H(+) = a 1,2-diacyl-sn-glycero-3-phosphoethanolamine + CO2. It functions in the pathway phospholipid metabolism; phosphatidylethanolamine biosynthesis; phosphatidylethanolamine from CDP-diacylglycerol: step 2/2. Functionally, catalyzes the formation of phosphatidylethanolamine (PtdEtn) from phosphatidylserine (PtdSer). The sequence is that of Phosphatidylserine decarboxylase proenzyme from Bradyrhizobium sp. (strain ORS 278).